A 177-amino-acid chain; its full sequence is MSRVGKLPITIPEGVKVGLNDLEVKISGPKGELSKTFKGNIAIIMEENKLVVKPLAVNKNARAMWGTARSIICNMITGVKEGFKLKLEINGVGYRAMVKGKYLNLMLAKSHNTKIEIPSNIKIDLPKQNIILLEGIDKEKLGQFASIIIKQRPPEPYKGKGIKFENKFIQRKEGKKN.

The protein belongs to the universal ribosomal protein uL6 family. As to quaternary structure, part of the 50S ribosomal subunit.

Functionally, this protein binds to the 23S rRNA, and is important in its secondary structure. It is located near the subunit interface in the base of the L7/L12 stalk, and near the tRNA binding site of the peptidyltransferase center. This is Large ribosomal subunit protein uL6 from Rickettsia prowazekii (strain Madrid E).